The sequence spans 310 residues: Lipoyl synthase (310 aa).

The [4Fe-4S] cluster site is built by cysteine 51, cysteine 56, cysteine 62, cysteine 77, cysteine 81, cysteine 84, and serine 290. The 218-residue stretch at 63-280 (WSRKTATYLA…RRVGESLGLF (218 aa)) folds into the Radical SAM core domain.

It belongs to the radical SAM superfamily. Lipoyl synthase family. The cofactor is [4Fe-4S] cluster.

The protein resides in the cytoplasm. The catalysed reaction is [[Fe-S] cluster scaffold protein carrying a second [4Fe-4S](2+) cluster] + N(6)-octanoyl-L-lysyl-[protein] + 2 oxidized [2Fe-2S]-[ferredoxin] + 2 S-adenosyl-L-methionine + 4 H(+) = [[Fe-S] cluster scaffold protein] + N(6)-[(R)-dihydrolipoyl]-L-lysyl-[protein] + 4 Fe(3+) + 2 hydrogen sulfide + 2 5'-deoxyadenosine + 2 L-methionine + 2 reduced [2Fe-2S]-[ferredoxin]. The protein operates within protein modification; protein lipoylation via endogenous pathway; protein N(6)-(lipoyl)lysine from octanoyl-[acyl-carrier-protein]: step 2/2. Functionally, catalyzes the radical-mediated insertion of two sulfur atoms into the C-6 and C-8 positions of the octanoyl moiety bound to the lipoyl domains of lipoate-dependent enzymes, thereby converting the octanoylated domains into lipoylated derivatives. This is Lipoyl synthase from Chlamydia abortus (strain DSM 27085 / S26/3) (Chlamydophila abortus).